The sequence spans 1212 residues: MGVDFDVKTFCHNLRATKPPYECPVETCRKVYKSYSGIEYHLYHYDHDSPPPPQQTPLRKHKKKGRQSRPANKQSPSPSEVSQSPGREVMSYAQAQRMVEVDLHGRVHRISIFDNLDVVSEDEEAPEEAPENGSNKENTETPAATPKSGKHKNKEKRKDSNHHHHSAPASAAPKLPEVVYRELEQDTPDAPPRPTSYYRYIEKSAEELDEEVEYDMDEEDYIWLDIMNERRKTEGVSPIPQEIFEYLMDRLEKESYFESHNKGDPNALVDEDAVCCICNDGECQNSNVILFCDMCNLAVHQECYGVPYIPEGQWLCRRCLQSPSRAVDCALCPNKGGAFKQTDDGRWAHVVCALWIPEVCFANTVFLEPIDSIEHIPPARWKLTCYICKQRGSGACIQCHKANCYTAFHVTCAQQAGLYMKMEPVRETGANGTSFSVRKTAYCDIHTPPGSARRLPALSHSEGEEEEDEEEDEGKSWSSEKVKKAKAKSRIKMKKARKILAEKRAAAPVVSVPCIPPHRLSKITNRLTIQRKSQFMQRLHSYWTLKRQSRNGVPLLRRLQTHLQSQRNCEQVGRDSDDKNWALKEQLKSWQRLRHDLERARLLVELIRKREKLKRETIKIQQIAMEMQLTPFLILLRKTLEQLQEKDTGNIFSEPVPLSEVPDYLDHIKKPMDFFTMKQNLEAYRYLNFDDFEEDFNLIVSNCLKYNAKDTIFYRAAVRLREQGGAVLRQARRQAEKMGIDFETGMHIPHNLAGDEVSHHTEDVEEERLVLLENQKHLPVEEQLKLLLERLDEVNASKQSVGRSRRAKMIKKEMTALRRKLAHQRETGRDGPERHGPSGRGNLTPHPAACDKDGQTDSAAEESSSQETSKGLGPNMSSTPAHEVGRRTSVLFSKKNPKTAGPPKRPGRPPKNRESQMTPSHGGSPVGPPQLPIMGSLRQRKRGRSPRPSSSSDSDSDKSTEDPPMDLPANGFSSGNQPVKKSFLVYRNDCNLPRSSSDSESSSSSSSSAASDRTSTTPSKQGRGKPSFSRGTFPEDSSEDTSGTENEAYSVGTGRGVGHSMVRKSLGRGAGWLSEDEDSPLDALDLVWAKCRGYPSYPALIIDPKMPREGMFHHGVPIPVPPLEVLKLGEQMTQEAREHLYLVLFFDNKRTWQWLPRTKLVPLGVNQDLDKEKMLEGRKSNIRKSVQIAYHRALQHRSKVQGEQSSETSDSD.

The C2H2-type zinc finger occupies 21 to 47; that stretch reads YECPVETCRKVYKSYSGIEYHLYHYDH. 2 disordered regions span residues 43–87 and 118–176; these read YHYD…SPGR and VVSE…PKLP. Residues 58–67 show a composition bias toward basic residues; it reads LRKHKKKGRQ. An interaction with KAT6A and KAT6B region spans residues 59 to 221; it reads RKHKKKGRQS…VEYDMDEEDY (163 aa). The segment covering 74–85 has biased composition (low complexity); that stretch reads QSPSPSEVSQSP. The span at 119–130 shows a compositional bias: acidic residues; that stretch reads VSEDEEAPEEAP. Serine 120 is modified (phosphoserine). Lysine 147 carries the post-translational modification N6-acetyllysine. The segment covering 148–166 has biased composition (basic residues); that stretch reads SGKHKNKEKRKDSNHHHHS. Serine 237 carries the phosphoserine modification. The PHD-type 1 zinc finger occupies 272-322; the sequence is DAVCCICNDGECQNSNVILFCDMCNLAVHQECYGVPYIPEGQWLCRRCLQS. The C2HC pre-PHD-type zinc-finger motif lies at 326-359; that stretch reads AVDCALCPNKGGAFKQTDDGRWAHVVCALWIPEV. The PHD-type 2 zinc finger occupies 383 to 447; that stretch reads LTCYICKQRG…RKTAYCDIHT (65 aa). Residues 447-489 form a disordered region; sequence TPPGSARRLPALSHSEGEEEEDEEEDEGKSWSSEKVKKAKAKS. Phosphoserine occurs at positions 459 and 461. The segment covering 463–473 has biased composition (acidic residues); sequence GEEEEDEEEDE. Positions 500–819 are interaction with MEAF6 and ING5; sequence LAEKRAAAPV…IKKEMTALRR (320 aa). The tract at residues 542-1077 is required for RUNX1 and RUNX2 transcriptional activation; that stretch reads YWTLKRQSRN…RGAGWLSEDE (536 aa). An N6-acetyllysine modification is found at lysine 579. Residues 627 to 731 form the Bromo domain; that stretch reads MQLTPFLILL…EQGGAVLRQA (105 aa). The segment at 817-1060 is disordered; it reads LRRKLAHQRE…VGTGRGVGHS (244 aa). Basic and acidic residues predominate over residues 823–836; that stretch reads HQRETGRDGPERHG. The residue at position 856 (threonine 856) is a Phosphothreonine. Over residues 856-869 the composition is skewed to low complexity; the sequence is TDSAAEESSSQETS. Phosphoserine is present on residues serine 858, serine 915, serine 920, and serine 924. Over residues 993–1019 the composition is skewed to low complexity; the sequence is PRSSSDSESSSSSSSSAASDRTSTTPS. Position 1074 is a phosphoserine (serine 1074). A PWWP domain is found at 1083–1166; the sequence is ALDLVWAKCR…RTKLVPLGVN (84 aa). Phosphoserine is present on serine 1185.

In terms of assembly, component of some HBO1 complex composed of KAT7/HBO1, MEAF6, ING5, and BRPF1. Component of the MOZ/MORF complex composed at least of ING5, KAT6A, KAT6B, MEAF6 and one of BRPF1, BRD1/BRPF2 and BRPF3. Interacts (via PHD-type zinc finger domains) with unmethylated histone H3 at 'Lys-4' (H3K4me0). Interacts with trimethylated 'Lys-36' of histone H3 (H3K36me3). Interacts with ING5; interaction directs BRPF1 to H4K4me3-enriched chromatin at the 5' of active genes. Interacts with KAT7. Acetylated by KAT6A. As to expression, expressed at low level in most tissues, with high expression in the testis and specific regions of the brain.

It is found in the nucleus. The protein localises to the chromosome. It localises to the cytoplasm. In terms of biological role, scaffold subunit of various histone acetyltransferase (HAT) complexes, such as the MOZ/MORF and HBO1 complexes, which have a histone H3 acetyltransferase activity. Plays a key role in HBO1 complex by directing KAT7/HBO1 specificity towards histone H3 'Lys-14' acetylation (H3K14ac). Some HAT complexes preferentially mediate histone H3 'Lys-23' (H3K23ac) acetylation. Positively regulates the transcription of RUNX1 and RUNX2. This is Peregrin from Mus musculus (Mouse).